The following is a 378-amino-acid chain: MDSARAPTEDEIAKFLATRTSSQMLQLMRCIKQPAAQFAFTAKLLTITPVKNTPPTVPEKAKKALNAFVGFRCYYIAIPAFKPWPMKKLSNLISLLWEGDPNKSLWSLMAKAWSNIRDQVGKDQAPLDEFFGIICPHLELPDPAYYLDLHGWSLGVNQEGDPTLLRIIDSKPASIGIGHINLALSVEDIITFVQKAGFAPTYTPDANDTSPTFLGQSLSSTFEVNHPANSIPAASQVDQARVAARNRRRAKRQSARELEFQEKLENDLEFKEKINREMDLVLERTPPAGPDPLPDFDFTPFYEGVNNLICEHMAMEQSNAGYPEGAHLFNDFGIDSSKAYLGMDNFATDMPDLIDYDAFRLGANEDVALPVFDDIAHA.

The segment at residues 60–117 (KAKKALNAFVGFRCYYIAIPAFKPWPMKKLSNLISLLWEGDPNKSLWSLMAKAWSNIR) is a DNA-binding region (alpha box). Positions 235–256 (SQVDQARVAARNRRRAKRQSAR) are disordered. A compositionally biased stretch (basic residues) spans 244–253 (ARNRRRAKRQ).

This sequence belongs to the MATALPHA1 family.

It localises to the nucleus. Mating type proteins are sequence specific DNA-binding proteins that act as master switches in fungal differentiation by controlling gene expression in a cell type-specific fashion. Transcriptional activator that induces the transcription of alpha-specific genes. The sequence is that of Mating-type protein MAT-1 (MAT1) from Cochliobolus ellisii (Curvularia ellisii).